Here is a 393-residue protein sequence, read N- to C-terminus: Fructose-bisphosphate aldolase 4, cytosolic (393 aa).

R73 contributes to the substrate binding site. C207 bears the S-glutathionyl cysteine; transient; alternate mark. An S-nitrosocysteine; transient; alternate modification is found at C207. Catalysis depends on E217, which acts as the Proton acceptor. The active-site Schiff-base intermediate with dihydroxyacetone-P is the K259. Substrate is bound by residues 301–303 and R333; that span reads SGG.

This sequence belongs to the class I fructose-bisphosphate aldolase family. In terms of assembly, homotetramer. S-glutathionylated at Cys-207. In terms of processing, S-nitrosylated at Cys-207. In terms of tissue distribution, highly expressed in flowers.

It localises to the cytoplasm. It is found in the cytosol. It carries out the reaction beta-D-fructose 1,6-bisphosphate = D-glyceraldehyde 3-phosphate + dihydroxyacetone phosphate. It participates in carbohydrate degradation; glycolysis; D-glyceraldehyde 3-phosphate and glycerone phosphate from D-glucose: step 4/4. Fructose-bisphosphate aldolase that plays a key role in glycolysis and gluconeogenesis. This is Fructose-bisphosphate aldolase 4, cytosolic from Arabidopsis thaliana (Mouse-ear cress).